Consider the following 690-residue polypeptide: Serotransferrin (690 aa).

The N-terminal stretch at 1–17 is a signal peptide; sequence MKPLLLLTLLGCLAAAL. Transferrin-like domains lie at 24-329 and 340-670; these read VKWC…SLKK and IKWC…SLRK. Cysteines 27 and 49 form a disulfide. Asp73 and Tyr103 together coordinate Fe(3+). Intrachain disulfides connect Cys126–Cys206, Cys171–Cys185, and Cys234–Cys248. 4 residues coordinate hydrogencarbonate: Thr128, Lys132, Ala134, and Gly135. Tyr200 serves as a coordination point for Fe(3+). Fe(3+) is bound at residue His256. Disulfide bonds link Cys343/Cys379 and Cys353/Cys370. Fe(3+) is bound by residues Asp394 and Tyr429. 7 cysteine pairs are disulfide-bonded: Cys404-Cys682, Cys419-Cys643, Cys452-Cys530, Cys476-Cys671, Cys486-Cys499, Cys496-Cys513, and Cys570-Cys584. 4 residues coordinate hydrogencarbonate: Thr454, Arg458, Ala460, and Gly461. Tyr524 lines the Fe(3+) pocket. Fe(3+) is bound at residue His592.

Belongs to the transferrin family. In terms of assembly, monomer.

The protein resides in the secreted. Functionally, transferrins are iron binding transport proteins which can bind two Fe(3+) ions in association with the binding of an anion, usually bicarbonate. The protein is Serotransferrin (tf) of Oryzias latipes (Japanese rice fish).